The primary structure comprises 394 residues: Elongation factor Tu (394 aa).

Residues 10–204 (KPHVNVGTIG…ALDSYIPEPE (195 aa)) form the tr-type G domain. The interval 19–26 (GHVDHGKT) is G1. GTP is bound at residue 19–26 (GHVDHGKT). Residue Thr-26 coordinates Mg(2+). Positions 60–64 (GITIS) are G2. Residues 81 to 84 (DCPG) form a G3 region. GTP is bound by residues 81–85 (DCPGH) and 136–139 (NKCD). Residues 136–139 (NKCD) form a G4 region. The tract at residues 174-176 (SAL) is G5.

The protein belongs to the TRAFAC class translation factor GTPase superfamily. Classic translation factor GTPase family. EF-Tu/EF-1A subfamily. In terms of assembly, monomer.

Its subcellular location is the cytoplasm. It catalyses the reaction GTP + H2O = GDP + phosphate + H(+). Functionally, GTP hydrolase that promotes the GTP-dependent binding of aminoacyl-tRNA to the A-site of ribosomes during protein biosynthesis. In Pseudoalteromonas atlantica (strain T6c / ATCC BAA-1087), this protein is Elongation factor Tu.